A 424-amino-acid chain; its full sequence is MTKPVWIRHASQLATLAGGSSSPVVGAKMNELSIIEDGSIWLEDGVIQRVGTDEDLALHYRDRTHEAQIIDASGKLVTPGLIDPHTHLVHAGSRQNEFNMRLNGATYMEIMNNGGGIHSTTAATRAATHEELFAQSKQRLDQFLLHGVTTVEAKSGYGLTLEDELKQLEVAKQLNEAHPIDIVSTFMGAHAVPREYKENPDAFVDMVIEEMIPEVARRKLAVFNDVFCERGVFTPEQSRRILEAGVRHGLLPKIHADEIEPYEGAELAASVGAVSADHLLRASDKGIEQMAEAGVIAVLLPGTAFFLMAESANGRKMIDRGVAVAISTDCNPGSSPTVSLPLIMNLGCLKMGMTPAEVLTAATINAAHAIRCAHEVGSLEVGKKADVTIFDVPDFMTLQYRYGINHVNTVIKNGTIVVAEGRLA.

Fe(3+)-binding residues include His-85 and His-87. The Zn(2+) site is built by His-85 and His-87. Arg-94, Tyr-157, and His-190 together coordinate 4-imidazolone-5-propanoate. An N-formimidoyl-L-glutamate-binding site is contributed by Tyr-157. Position 255 (His-255) interacts with Fe(3+). His-255 is a binding site for Zn(2+). 4-imidazolone-5-propanoate is bound at residue Glu-258. Asp-329 is a Fe(3+) binding site. Residue Asp-329 coordinates Zn(2+). 2 residues coordinate N-formimidoyl-L-glutamate: Asn-331 and Gly-333. Ser-334 contributes to the 4-imidazolone-5-propanoate binding site.

This sequence belongs to the metallo-dependent hydrolases superfamily. HutI family. Zn(2+) is required as a cofactor. Fe(3+) serves as cofactor.

It is found in the cytoplasm. It carries out the reaction 4-imidazolone-5-propanoate + H2O = N-formimidoyl-L-glutamate. The protein operates within amino-acid degradation; L-histidine degradation into L-glutamate; N-formimidoyl-L-glutamate from L-histidine: step 3/3. Its function is as follows. Catalyzes the hydrolytic cleavage of the carbon-nitrogen bond in imidazolone-5-propanoate to yield N-formimidoyl-L-glutamate. It is the third step in the universal histidine degradation pathway. In Brevibacillus brevis (strain 47 / JCM 6285 / NBRC 100599), this protein is Imidazolonepropionase.